The following is a 466-amino-acid chain: 3-isopropylmalate dehydratase large subunit (466 aa).

3 residues coordinate [4Fe-4S] cluster: Cys347, Cys407, and Cys410.

This sequence belongs to the aconitase/IPM isomerase family. LeuC type 1 subfamily. Heterodimer of LeuC and LeuD. It depends on [4Fe-4S] cluster as a cofactor.

The enzyme catalyses (2R,3S)-3-isopropylmalate = (2S)-2-isopropylmalate. It functions in the pathway amino-acid biosynthesis; L-leucine biosynthesis; L-leucine from 3-methyl-2-oxobutanoate: step 2/4. Functionally, catalyzes the isomerization between 2-isopropylmalate and 3-isopropylmalate, via the formation of 2-isopropylmaleate. The sequence is that of 3-isopropylmalate dehydratase large subunit from Shewanella piezotolerans (strain WP3 / JCM 13877).